A 212-amino-acid chain; its full sequence is Protein Thf1 (212 aa).

Residues Glu-179–Lys-201 are a coiled coil.

The protein belongs to the THF1 family.

Functionally, may be involved in photosynthetic membrane biogenesis. The chain is Protein Thf1 from Parasynechococcus marenigrum (strain WH8102).